Here is a 397-residue protein sequence, read N- to C-terminus: Elongation factor Tu (397 aa).

The 198-residue stretch at 10–207 folds into the tr-type G domain; that stretch reads KPHCNIGTIG…AVDEYIPQPE (198 aa). Positions 19–26 are G1; sequence GHVDHGKT. 19-26 lines the GTP pocket; it reads GHVDHGKT. Mg(2+) is bound at residue Thr26. The tract at residues 61–65 is G2; that stretch reads GITIS. The G3 stretch occupies residues 82-85; sequence DCPG. GTP-binding positions include 82–86 and 137–140; these read DCPGH and NKVD. Residues 137–140 are G4; sequence NKVD. The interval 175–177 is G5; the sequence is SAL.

It belongs to the TRAFAC class translation factor GTPase superfamily. Classic translation factor GTPase family. EF-Tu/EF-1A subfamily. Monomer.

It localises to the cytoplasm. The catalysed reaction is GTP + H2O = GDP + phosphate + H(+). Functionally, GTP hydrolase that promotes the GTP-dependent binding of aminoacyl-tRNA to the A-site of ribosomes during protein biosynthesis. In Zymomonas mobilis subsp. mobilis (strain ATCC 31821 / ZM4 / CP4), this protein is Elongation factor Tu.